A 261-amino-acid chain; its full sequence is Cytochrome c oxidase subunit 3 (261 aa).

Over 1–15 (MTHQTHACHMVNPSP) the chain is Mitochondrial matrix. The helical transmembrane segment at 16-34 (WPLTGALSGLLMTSGLIMW) threads the bilayer. Over 35–40 (FHFNST) the chain is Mitochondrial intermembrane. A helical transmembrane segment spans residues 41–66 (TLLMLGLTTNMLTMYQWWRDVIREST). The Mitochondrial matrix portion of the chain corresponds to 67–72 (FQGHHT). A helical transmembrane segment spans residues 73–105 (PNVQKGLRYGMILFIISEVLFFTGFFWAFYHSS). Topologically, residues 106–128 (LAPTPELGGCWPPTGIHPLNPLE) are mitochondrial intermembrane. Residues 129–152 (VPLLNTSVLLASGVSITWAHHSLM) traverse the membrane as a helical segment. Topologically, residues 153–155 (EGN) are mitochondrial matrix. A helical transmembrane segment spans residues 156 to 183 (RNHMLQALFITIALGVYFTLLQASEYYE). The Mitochondrial intermembrane segment spans residues 184 to 190 (APFTISD). The chain crosses the membrane as a helical span at residues 191 to 223 (GVYGSTFFVATGFHGLHVIIGSTFLIVCFFRQL). At 224 to 232 (KFHFTSSHH) the chain is on the mitochondrial matrix side. The helical transmembrane segment at 233–256 (FGFEAAAWYWHFVDVVWLFLYVSI) threads the bilayer. Residues 257–261 (YWWGS) lie on the Mitochondrial intermembrane side of the membrane.

It belongs to the cytochrome c oxidase subunit 3 family. As to quaternary structure, component of the cytochrome c oxidase (complex IV, CIV), a multisubunit enzyme composed of 14 subunits. The complex is composed of a catalytic core of 3 subunits MT-CO1, MT-CO2 and MT-CO3, encoded in the mitochondrial DNA, and 11 supernumerary subunits COX4I, COX5A, COX5B, COX6A, COX6B, COX6C, COX7A, COX7B, COX7C, COX8 and NDUFA4, which are encoded in the nuclear genome. The complex exists as a monomer or a dimer and forms supercomplexes (SCs) in the inner mitochondrial membrane with NADH-ubiquinone oxidoreductase (complex I, CI) and ubiquinol-cytochrome c oxidoreductase (cytochrome b-c1 complex, complex III, CIII), resulting in different assemblies (supercomplex SCI(1)III(2)IV(1) and megacomplex MCI(2)III(2)IV(2)).

Its subcellular location is the mitochondrion inner membrane. It catalyses the reaction 4 Fe(II)-[cytochrome c] + O2 + 8 H(+)(in) = 4 Fe(III)-[cytochrome c] + 2 H2O + 4 H(+)(out). In terms of biological role, component of the cytochrome c oxidase, the last enzyme in the mitochondrial electron transport chain which drives oxidative phosphorylation. The respiratory chain contains 3 multisubunit complexes succinate dehydrogenase (complex II, CII), ubiquinol-cytochrome c oxidoreductase (cytochrome b-c1 complex, complex III, CIII) and cytochrome c oxidase (complex IV, CIV), that cooperate to transfer electrons derived from NADH and succinate to molecular oxygen, creating an electrochemical gradient over the inner membrane that drives transmembrane transport and the ATP synthase. Cytochrome c oxidase is the component of the respiratory chain that catalyzes the reduction of oxygen to water. Electrons originating from reduced cytochrome c in the intermembrane space (IMS) are transferred via the dinuclear copper A center (CU(A)) of subunit 2 and heme A of subunit 1 to the active site in subunit 1, a binuclear center (BNC) formed by heme A3 and copper B (CU(B)). The BNC reduces molecular oxygen to 2 water molecules using 4 electrons from cytochrome c in the IMS and 4 protons from the mitochondrial matrix. This is Cytochrome c oxidase subunit 3 (MT-CO3) from Gazella saudiya (Saudi gazelle).